Here is a 389-residue protein sequence, read N- to C-terminus: Succinate--CoA ligase [ADP-forming] subunit beta (389 aa).

The ATP-grasp domain maps to 9–244 (KEILRKYNVP…LDEEDANEIE (236 aa)). ATP contacts are provided by residues Lys46, 53 to 55 (GRG), Glu99, Ala102, and Glu107. 2 residues coordinate Mg(2+): Asn199 and Asp213. Substrate is bound by residues Asn264 and 321 to 323 (GIM).

This sequence belongs to the succinate/malate CoA ligase beta subunit family. Heterotetramer of two alpha and two beta subunits. It depends on Mg(2+) as a cofactor.

The catalysed reaction is succinate + ATP + CoA = succinyl-CoA + ADP + phosphate. It carries out the reaction GTP + succinate + CoA = succinyl-CoA + GDP + phosphate. It functions in the pathway carbohydrate metabolism; tricarboxylic acid cycle; succinate from succinyl-CoA (ligase route): step 1/1. In terms of biological role, succinyl-CoA synthetase functions in the citric acid cycle (TCA), coupling the hydrolysis of succinyl-CoA to the synthesis of either ATP or GTP and thus represents the only step of substrate-level phosphorylation in the TCA. The beta subunit provides nucleotide specificity of the enzyme and binds the substrate succinate, while the binding sites for coenzyme A and phosphate are found in the alpha subunit. The polypeptide is Succinate--CoA ligase [ADP-forming] subunit beta (Cupriavidus pinatubonensis (strain JMP 134 / LMG 1197) (Cupriavidus necator (strain JMP 134))).